Here is a 264-residue protein sequence, read N- to C-terminus: Glucosamine-6-phosphate deaminase (264 aa).

Catalysis depends on aspartate 72, which acts as the Proton acceptor; for enolization step. Aspartate 141 acts as the For ring-opening step in catalysis. Histidine 143 acts as the Proton acceptor; for ring-opening step in catalysis. Glutamate 148 (for ring-opening step) is an active-site residue.

The protein belongs to the glucosamine/galactosamine-6-phosphate isomerase family. NagB subfamily. As to quaternary structure, homohexamer.

It catalyses the reaction alpha-D-glucosamine 6-phosphate + H2O = beta-D-fructose 6-phosphate + NH4(+). Its pathway is amino-sugar metabolism; N-acetylneuraminate degradation; D-fructose 6-phosphate from N-acetylneuraminate: step 5/5. Its activity is regulated as follows. Allosterically activated by N-acetylglucosamine 6-phosphate (GlcNAc6P). Its function is as follows. Catalyzes the reversible isomerization-deamination of glucosamine 6-phosphate (GlcN6P) to form fructose 6-phosphate (Fru6P) and ammonium ion. This Glaesserella parasuis serovar 5 (strain SH0165) (Haemophilus parasuis) protein is Glucosamine-6-phosphate deaminase.